We begin with the raw amino-acid sequence, 442 residues long: MITGKELRIISLLTLDTVFFLLEITIGYMSHSLALIADSFHMLNDIISLLVALWAVDVAKNRGPDAKYTYGWKRAEILGALINAVFLIALCFSIMIEALQRLIEPQEIQNPRLVLYVGVAGLISNVVGLFLFHDHGSDSLHSHSHGSVESGNNDLDIESNATHSHSHASLPNDNLAIDEDAISSPGPSGQIGEVLPQSVVNRLSNESQPLLNHDDHDHSHESKKPGHRSLNMHGVFLHVLGDALGNIGVIAAALFIWKTEYSWRYYSDPIVSLIITIIIFSSALPLSRRASRILLQATPSTISADQIQREILAVPGVIAVHDFHVWNLTESIYIASIHVQIDCAPDKFMSSAKLIRKIFHQHGIHSATVQPEFVSGDVNEDIRRRFSIIAGGSPSSSQEAFDSHGNTEHGRKKRSPTAYGATTASSNCIVDDAVNCNTSNCL.

The Cytoplasmic segment spans residues 1-8 (MITGKELR). Residues 9–29 (IISLLTLDTVFFLLEITIGYM) traverse the membrane as a helical segment. The Vacuolar segment spans residues 30 to 32 (SHS). The chain crosses the membrane as a helical span at residues 33-53 (LALIADSFHMLNDIISLLVAL). At 54 to 75 (WAVDVAKNRGPDAKYTYGWKRA) the chain is on the cytoplasmic side. The helical transmembrane segment at 76–96 (EILGALINAVFLIALCFSIMI) threads the bilayer. Over 97–112 (EALQRLIEPQEIQNPR) the chain is Vacuolar. A helical membrane pass occupies residues 113–133 (LVLYVGVAGLISNVVGLFLFH). Residues 134-235 (DHGSDSLHSH…GHRSLNMHGV (102 aa)) are Cytoplasmic-facing. 3 short sequence motifs (histidine repeat) span residues 141–145 (HSHSH), 163–167 (HSHSH), and 216–220 (HDHSH). Disordered regions lie at residues 141–170 (HSHSHGSVESGNNDLDIESNATHSHSHASL) and 208–227 (QPLLNHDDHDHSHESKKPGH). The span at 149–170 (ESGNNDLDIESNATHSHSHASL) shows a compositional bias: polar residues. Residues 212–224 (NHDDHDHSHESKK) show a composition bias toward basic and acidic residues. The chain crosses the membrane as a helical span at residues 236–256 (FLHVLGDALGNIGVIAAALFI). Over 257-265 (WKTEYSWRY) the chain is Vacuolar. The chain crosses the membrane as a helical span at residues 266–286 (YSDPIVSLIITIIIFSSALPL). The Cytoplasmic segment spans residues 287 to 442 (SRRASRILLQ…AVNCNTSNCL (156 aa)). Lys357 is covalently cross-linked (Glycyl lysine isopeptide (Lys-Gly) (interchain with G-Cter in ubiquitin)). Phosphoserine occurs at positions 387, 393, and 397. The segment at 391–419 (GGSPSSSQEAFDSHGNTEHGRKKRSPTAY) is disordered.

The protein belongs to the cation diffusion facilitator (CDF) transporter (TC 2.A.4) family. SLC30A subfamily.

The protein resides in the vacuole membrane. The catalysed reaction is Zn(2+)(in) = Zn(2+)(out). Functionally, vacuolar transporter that regulates zinc homeostasis by mediating zinc transport and storage into the vacuole. ZRC1 senses zinc availability in the cytosol, which might be performed through the histidine repeat motifs, and transports zinc from the cytosol to the vacuole if zinc in cytosol is abundant, conferring resistance to zinc toxicity. Plays a role in resistance to zinc shock resulting from sudden influx of zinc into cytoplasm when ZRT1 and ZRT2 are induced in response to zinc depletion. The polypeptide is Vacuolar zinc transporter ZRC1 (Saccharomyces cerevisiae (strain ATCC 204508 / S288c) (Baker's yeast)).